We begin with the raw amino-acid sequence, 424 residues long: Cuticlin-1 (424 aa).

Positions 1–18 (MTWKPIICLAALVLSASA) are cleaved as a signal peptide. Residues 19–392 (IPVDNNVEGE…ATSTGICLTP (374 aa)) lie on the Extracellular side of the membrane. A ZP domain is found at 32–277 (ECGPNSITVN…PTCSEPQGFG (246 aa)). The cysteines at positions 197 and 252 are disulfide-linked. A run of 4 repeats spans residues 302–305 (AAPV), 307–311 (AAAPV), 312–315 (AAPV), and 320–323 (AAPA). The interval 302–323 (AAPVAAAAPVAAPVAAAAAAPA) is 4 X 4 AA repeats of A-A-P-[AVI]. Residues 393-413 (IGFASFLGIGTIVATALSATI) traverse the membrane as a helical segment. Residues 414-424 (FYVARPTSHKH) are Cytoplasmic-facing.

The protein resides in the cell membrane. Its subcellular location is the secreted. In terms of biological role, component of the cuticles, which contributes to the formation of extracellular envelopes protecting the organism from the environment. Plays a role in alae formation in dauer larvae. This chain is Cuticlin-1, found in Caenorhabditis elegans.